The sequence spans 440 residues: ATP-dependent protease ATPase subunit HslU (440 aa).

Residues Val18, 60–65 (GVGKTE), Asp254, Glu319, and Arg391 contribute to the ATP site.

This sequence belongs to the ClpX chaperone family. HslU subfamily. As to quaternary structure, a double ring-shaped homohexamer of HslV is capped on each side by a ring-shaped HslU homohexamer. The assembly of the HslU/HslV complex is dependent on binding of ATP.

It is found in the cytoplasm. ATPase subunit of a proteasome-like degradation complex; this subunit has chaperone activity. The binding of ATP and its subsequent hydrolysis by HslU are essential for unfolding of protein substrates subsequently hydrolyzed by HslV. HslU recognizes the N-terminal part of its protein substrates and unfolds these before they are guided to HslV for hydrolysis. The chain is ATP-dependent protease ATPase subunit HslU from Cellvibrio japonicus (strain Ueda107) (Pseudomonas fluorescens subsp. cellulosa).